Here is a 443-residue protein sequence, read N- to C-terminus: C4-dicarboxylate transport protein (443 aa).

A run of 9 helical transmembrane segments spans residues 10-30, 46-66, 78-98, 143-163, 199-219, 224-244, 291-311, 332-352, and 354-374; these read SLYFQVIVAIVIGILLGHFYP, LIKMVIAPIIFCTVVSGIAGM, YALLYFEIVSTVALLIGLIVV, IVGAFANGDILQVLMFSVIFG, PIGALGAMAFTIGAYGVGSLV, LMICFYITCLLFVLVVLGGIC, VVGLVIPTGYSFNLDGTSIYL, ITLLLVLLLSSKGAAGVTGSG, and IVLAATLSAVGHLPVAGLALI.

This sequence belongs to the dicarboxylate/amino acid:cation symporter (DAACS) (TC 2.A.23) family.

It localises to the cell inner membrane. Responsible for the transport of dicarboxylates such as succinate, fumarate, and malate from the periplasm across the membrane. The chain is C4-dicarboxylate transport protein from Pseudomonas fluorescens (strain SBW25).